The following is a 937-amino-acid chain: Protocadherin alpha-7 (937 aa).

An N-terminal signal peptide occupies residues 1-29 (MVNLRGYNWKSQQLLLFLIIVAAWEAGSG). Residues 30–697 (QLHYSVPEEA…RVDQRLVDVN (668 aa)) lie on the Extracellular side of the membrane. Cadherin domains are found at residues 34–133 (SVPE…PPMF), 157–242 (ASDA…APVF), 243–350 (DRSL…APQL), 351–455 (TVSS…APLF), 456–565 (AQPE…APTL), and 587–682 (PGQV…SSKV). Cysteines 96 and 102 form a disulfide. 2 O-linked (Man) threonine glycosylation sites follow: Thr-223 and Thr-225. 2 N-linked (GlcNAc...) asparagine glycosylation sites follow: Asn-257 and Asn-265. An O-linked (Man) threonine glycan is attached at Thr-438. O-linked (Man) serine glycosylation occurs at Ser-478. N-linked (GlcNAc...) asparagine glycosylation is present at Asn-548. Residues 698-718 (VYLIIAICAVSSLLVLTLLLY) traverse the membrane as a helical segment. Topologically, residues 719–937 (TALRCSATPT…GNSTTDNSDQ (219 aa)) are cytoplasmic. Disordered stretches follow at residues 755 to 794 (RQRV…PDWR) and 816 to 843 (RAGP…EVSP). PXXP repeat units lie at residues 774 to 777 (PSLP), 786 to 789 (PRQP), 819 to 822 (PGGP), 860 to 863 (PGNP), and 878 to 881 (PGSP). The 5 X 4 AA repeats of P-X-X-P stretch occupies residues 774 to 881 (PSLPQGPSST…PDKFIIPGSP (108 aa)). Residues 775 to 787 (SLPQGPSSTDNPR) are compositionally biased toward polar residues. The tract at residues 887 to 937 (RQEPANNQIDKSDFITFGKKEETKKKKKKKKGNKTQEKKEKGNSTTDNSDQ) is disordered. Over residues 896 to 910 (DKSDFITFGKKEETK) the composition is skewed to basic and acidic residues.

In terms of assembly, forms homodimers in trans (molecules expressed by two different cells). Forms promiscuous heterodimers in cis (at the plasma membrane of the same cell) with other protocadherins.

The protein resides in the cell membrane. Functionally, calcium-dependent cell-adhesion protein involved in cells self-recognition and non-self discrimination. Thereby, it is involved in the establishment and maintenance of specific neuronal connections in the brain. The sequence is that of Protocadherin alpha-7 from Mus musculus (Mouse).